We begin with the raw amino-acid sequence, 522 residues long: Colicin-E1 (522 aa).

Disordered regions lie at residues 26–52 and 136–165; these read NGTP…AAIH and EEKA…REKA. Gly residues predominate over residues 30–42; the sequence is DGSGSGGGGGKGG. 2 helical membrane passes run 471-487 and 494-510; these read AADA…FSLL and IWGI…YIDK.

The protein belongs to the channel forming colicin family.

The protein resides in the cell membrane. This colicin is a channel-forming colicin. This class of transmembrane toxins depolarize the cytoplasmic membrane, leading to dissipation of cellular energy. In terms of biological role, colicins are polypeptide toxins produced by and active against E.coli and closely related bacteria. This Escherichia coli protein is Colicin-E1 (cea).